Consider the following 291-residue polypeptide: Gamma-sarcoglycan (291 aa).

Residues 1-37 (MVREQYTTVTEGTHIERPENQHIYKIGIYGWRKRCLY) lie on the Cytoplasmic side of the membrane. A helical; Signal-anchor for type II membrane protein membrane pass occupies residues 38–58 (LFVLLLLAILVVNLALTIWIL). Residues 59-291 (KVMWFSPIGM…TCEEHSHVCL (233 aa)) lie on the Extracellular side of the membrane. N-linked (GlcNAc...) asparagine glycosylation occurs at Asn-110. Intrachain disulfides connect Cys-265–Cys-290 and Cys-267–Cys-283.

It belongs to the sarcoglycan beta/delta/gamma/zeta family. Interacts with the syntrophin SNTA1 and FLNC. Cross-link to form 2 major subcomplexes: one consisting of SGCB, SGCD and SGCG and the other consisting of SGCB and SGCD. The association between SGCB and SGCG is particularly strong while SGCA is loosely associated with the other sarcoglycans. As to expression, most strongly expressed in skeletal and heart muscle. Also detected in proliferating myoblasts.

Its subcellular location is the cell membrane. The protein localises to the sarcolemma. It is found in the cytoplasm. The protein resides in the cytoskeleton. Its function is as follows. Component of the sarcoglycan complex, a subcomplex of the dystrophin-glycoprotein complex which forms a link between the F-actin cytoskeleton and the extracellular matrix. This Mus musculus (Mouse) protein is Gamma-sarcoglycan (Sgcg).